A 1175-amino-acid chain; its full sequence is Tyrosine-protein phosphatase non-receptor type 21 (1175 aa).

In terms of domain architecture, FERM spans 23 to 308 (LVARIQLLNN…ARHKFYRLNQ (286 aa)). A compositionally biased stretch (polar residues) spans 395-421 (YSAHSTNSLNTPQPYLQPSPMSSNPSI). The segment at 395–445 (YSAHSTNSLNTPQPYLQPSPMSSNPSIPGSDVMRPDYIPSHRHSALIPPSY) is disordered. 10 positions are modified to phosphoserine: S577, S589, S590, S637, S673, S710, S711, S798, S800, and S805. The interval 663-702 (DVAPRTFSAGSQSSVFSDKVKQEGTEEQGSGGYSHKKSLS) is disordered. In terms of domain architecture, Tyrosine-protein phosphatase spans 897–1168 (VFTEYERILK…TFVYRVLIQF (272 aa)). Substrate contacts are provided by residues E1068, 1109–1115 (CSAGVGR), and Q1153. C1109 (phosphocysteine intermediate) is an active-site residue.

It belongs to the protein-tyrosine phosphatase family. Non-receptor class subfamily. Particularly abundantly in adrenal glands.

The protein resides in the cytoplasm. Its subcellular location is the cytoskeleton. It carries out the reaction O-phospho-L-tyrosyl-[protein] + H2O = L-tyrosyl-[protein] + phosphate. In Rattus norvegicus (Rat), this protein is Tyrosine-protein phosphatase non-receptor type 21 (Ptpn21).